Reading from the N-terminus, the 466-residue chain is Ribosomal protein uS12 methylthiotransferase RimO (466 aa).

One can recognise an MTTase N-terminal domain in the interval 31–141 (PTIGMVSLGC…VLDAVHGAVP (111 aa)). Positions 40, 76, 105, 172, 176, and 179 each coordinate [4Fe-4S] cluster. Residues 158–397 (LTPRHYSYLK…MAKAQAISEA (240 aa)) enclose the Radical SAM core domain. A TRAM domain is found at 400–466 (AARVGQVIEV…GEYDLWGRLR (67 aa)).

Belongs to the methylthiotransferase family. RimO subfamily. [4Fe-4S] cluster serves as cofactor.

The protein localises to the cytoplasm. It carries out the reaction L-aspartate(89)-[ribosomal protein uS12]-hydrogen + (sulfur carrier)-SH + AH2 + 2 S-adenosyl-L-methionine = 3-methylsulfanyl-L-aspartate(89)-[ribosomal protein uS12]-hydrogen + (sulfur carrier)-H + 5'-deoxyadenosine + L-methionine + A + S-adenosyl-L-homocysteine + 2 H(+). Functionally, catalyzes the methylthiolation of an aspartic acid residue of ribosomal protein uS12. The sequence is that of Ribosomal protein uS12 methylthiotransferase RimO from Ruegeria pomeroyi (strain ATCC 700808 / DSM 15171 / DSS-3) (Silicibacter pomeroyi).